Here is a 156-residue protein sequence, read N- to C-terminus: Ribosomal RNA large subunit methyltransferase H (156 aa).

S-adenosyl-L-methionine contacts are provided by residues G104 and 123 to 128; that span reads LSPMVM.

The protein belongs to the RNA methyltransferase RlmH family. Homodimer.

The protein resides in the cytoplasm. The enzyme catalyses pseudouridine(1915) in 23S rRNA + S-adenosyl-L-methionine = N(3)-methylpseudouridine(1915) in 23S rRNA + S-adenosyl-L-homocysteine + H(+). Its function is as follows. Specifically methylates the pseudouridine at position 1915 (m3Psi1915) in 23S rRNA. This Bdellovibrio bacteriovorus (strain ATCC 15356 / DSM 50701 / NCIMB 9529 / HD100) protein is Ribosomal RNA large subunit methyltransferase H.